We begin with the raw amino-acid sequence, 319 residues long: 3-oxoacyl-[acyl-carrier-protein] reductase, chloroplastic (319 aa).

A chloroplast-targeting transit peptide spans 1–57 (MAAAVAAPRLISLKAVAKLGFREISQIRQLAPLHSAIPHFGMLRCRSRQPFSTSVVK). The residue at position 58 (Ala-58) is an N-acetylalanine. 81 to 105 (ITGASRGIGKAIALALGKAGCKVLV) contacts NADP(+). Ser-213 contacts substrate. Catalysis depends on Tyr-226, which acts as the Proton acceptor.

This sequence belongs to the short-chain dehydrogenases/reductases (SDR) family. In terms of assembly, homotetramer.

Its subcellular location is the plastid. It localises to the chloroplast. It catalyses the reaction a (3R)-hydroxyacyl-[ACP] + NADP(+) = a 3-oxoacyl-[ACP] + NADPH + H(+). It participates in lipid metabolism; fatty acid biosynthesis. This chain is 3-oxoacyl-[acyl-carrier-protein] reductase, chloroplastic, found in Arabidopsis thaliana (Mouse-ear cress).